Here is a 362-residue protein sequence, read N- to C-terminus: Alkanal monooxygenase alpha chain (362 aa).

This sequence belongs to the bacterial luciferase oxidoreductase family. Heterodimer of an alpha and a beta chain.

It catalyses the reaction a long-chain fatty aldehyde + FMNH2 + O2 = a long-chain fatty acid + hnu + FMN + H2O + 2 H(+). In terms of biological role, light-emitting reaction in luminous bacteria. The sequence is that of Alkanal monooxygenase alpha chain (luxA) from Photorhabdus luminescens (Xenorhabdus luminescens).